A 209-amino-acid polypeptide reads, in one-letter code: Molybdenum cofactor guanylyltransferase (209 aa).

GTP-binding positions include 16–18 (LAG), Lys-28, Asn-56, Asp-69, and Asp-103. Asp-103 lines the Mg(2+) pocket.

Belongs to the MobA family. As to quaternary structure, monomer. The cofactor is Mg(2+).

The protein localises to the cytoplasm. It catalyses the reaction Mo-molybdopterin + GTP + H(+) = Mo-molybdopterin guanine dinucleotide + diphosphate. In terms of biological role, transfers a GMP moiety from GTP to Mo-molybdopterin (Mo-MPT) cofactor (Moco or molybdenum cofactor) to form Mo-molybdopterin guanine dinucleotide (Mo-MGD) cofactor. The chain is Molybdenum cofactor guanylyltransferase from Rhizobium leguminosarum bv. trifolii (strain WSM2304).